The primary structure comprises 166 residues: MKLAKTRFRPAPRELDLNIDYRVAATGLPRPSDFARWVGAALQGRSRPAQIGLHVVDNAEGQRLNAEYRGKDSATNVLSFALNEGEEAVAGLPLMGDIVLAAEVVAREAAEQGKDLHAHYAHLTVHGMLHLQGHDHETDTEAEAMEALETVILARLGYTDPYAVEH.

H126, H130, and H136 together coordinate Zn(2+).

This sequence belongs to the endoribonuclease YbeY family. Zn(2+) is required as a cofactor.

The protein localises to the cytoplasm. Functionally, single strand-specific metallo-endoribonuclease involved in late-stage 70S ribosome quality control and in maturation of the 3' terminus of the 16S rRNA. The sequence is that of Endoribonuclease YbeY from Laribacter hongkongensis (strain HLHK9).